Consider the following 49-residue polypeptide: Large ribosomal subunit protein bL33A (49 aa).

It belongs to the bacterial ribosomal protein bL33 family.

This chain is Large ribosomal subunit protein bL33A (rpmG1), found in Enterococcus faecalis (strain ATCC 700802 / V583).